A 185-amino-acid polypeptide reads, in one-letter code: Threonylcarbamoyl-AMP synthase (185 aa).

The YrdC-like domain maps to 4–185 (SFRVQQAARE…LATGEVVRPG (182 aa)).

It belongs to the SUA5 family. TsaC subfamily.

The protein localises to the cytoplasm. The catalysed reaction is L-threonine + hydrogencarbonate + ATP = L-threonylcarbamoyladenylate + diphosphate + H2O. Required for the formation of a threonylcarbamoyl group on adenosine at position 37 (t(6)A37) in tRNAs that read codons beginning with adenine. Catalyzes the conversion of L-threonine, HCO(3)(-)/CO(2) and ATP to give threonylcarbamoyl-AMP (TC-AMP) as the acyladenylate intermediate, with the release of diphosphate. This chain is Threonylcarbamoyl-AMP synthase, found in Pseudomonas putida (strain GB-1).